The sequence spans 248 residues: Coenzyme F420:L-glutamate ligase (248 aa).

GTP-binding positions include 15–18, 45–46, and lysine 50; these read IPLI and ET. Aspartate 115 provides a ligand contact to a divalent metal cation. Residue asparagine 118 participates in GTP binding. A divalent metal cation contacts are provided by aspartate 155, serine 156, and glutamine 213. A GTP-binding site is contributed by 211–218; it reads MGQSNEGI.

The protein belongs to the CofE family. As to quaternary structure, homodimer. It depends on Mg(2+) as a cofactor. Mn(2+) is required as a cofactor. K(+) serves as cofactor.

The catalysed reaction is oxidized coenzyme F420-0 + GTP + L-glutamate = oxidized coenzyme F420-1 + GDP + phosphate + H(+). It carries out the reaction oxidized coenzyme F420-1 + GTP + L-glutamate = oxidized coenzyme F420-2 + GDP + phosphate + H(+). The protein operates within cofactor biosynthesis; coenzyme F420 biosynthesis. Its function is as follows. Catalyzes the GTP-dependent successive addition of two or more gamma-linked L-glutamates to the L-lactyl phosphodiester of 7,8-didemethyl-8-hydroxy-5-deazariboflavin (F420-0) to form coenzyme F420-0-glutamyl-glutamate (F420-2) or polyglutamated F420 derivatives. The sequence is that of Coenzyme F420:L-glutamate ligase from Methanococcus maripaludis (strain C7 / ATCC BAA-1331).